The following is a 443-amino-acid chain: Serine/threonine-protein phosphatase 2A 55 kDa regulatory subunit B beta isoform (443 aa).

WD repeat units follow at residues 22–61, 87–128, 171–209, 220–260, 279–317, 334–375, and 410–443; these read TEAD…KSQP, EIEE…KRPE, AHTY…RSFN, ELTE…LCDN, EIIS…KPLE, ENDC…DVTL, and DFSK…DKVN.

The protein belongs to the phosphatase 2A regulatory subunit B family. As to quaternary structure, PP2A consists of a common heterodimeric core enzyme, composed of a 36 kDa catalytic subunit (subunit C) and a 65 kDa constant regulatory subunit (PR65 or subunit A), that associates with a variety of regulatory subunits.

It localises to the cytoplasm. Its subcellular location is the cytoskeleton. The protein resides in the membrane. In terms of biological role, the B regulatory subunit might modulate substrate selectivity and catalytic activity, and might also direct the localization of the catalytic enzyme to a particular subcellular compartment. The polypeptide is Serine/threonine-protein phosphatase 2A 55 kDa regulatory subunit B beta isoform (ppp2r2b) (Carassius auratus (Goldfish)).